Consider the following 504-residue polypeptide: Cytochrome P450 3A2 (504 aa).

Cys-443 provides a ligand contact to heme.

Belongs to the cytochrome P450 family. Heme is required as a cofactor. In terms of tissue distribution, expressed in liver.

The protein resides in the endoplasmic reticulum membrane. The protein localises to the microsome membrane. The enzyme catalyses an organic molecule + reduced [NADPH--hemoprotein reductase] + O2 = an alcohol + oxidized [NADPH--hemoprotein reductase] + H2O + H(+). In terms of biological role, cytochromes P450 are a group of heme-thiolate monooxygenases. In liver microsomes, this enzyme is involved in an NADPH-dependent electron transport pathway. It oxidizes a variety of structurally unrelated compounds, including steroids, fatty acids, and xenobiotics. The polypeptide is Cytochrome P450 3A2 (Cyp3a2) (Rattus norvegicus (Rat)).